A 463-amino-acid polypeptide reads, in one-letter code: Probable mannan endo-1,4-beta-mannosidase F (463 aa).

A signal peptide spans 1-18 (MRSLSSIALLSVVGAASA). Positions 19 to 54 (QAGPWAQCGGKSFSGSSECASGWKCQELNEWFSQCV) constitute a CBM1 domain. The tract at residues 57–78 (AESTTPTVSSTPTPTDAPSVSI) is disordered. Over residues 59-77 (STTPTVSSTPTPTDAPSVS) the composition is skewed to low complexity. Positions 75–118 (SVSITASATTGINKSISVSSASKSTPLPSSSSASPSPRPTGSGS) are ser-rich linker. N-linked (GlcNAc...) asparagine glycosylation is present at Asn-87. The span at 93–118 (SSASKSTPLPSSSSASPSPRPTGSGS) shows a compositional bias: low complexity. The disordered stretch occupies residues 93-121 (SSASKSTPLPSSSSASPSPRPTGSGSFAK). Positions 119-463 (FAKADGLQFS…MDHMENVNKN (345 aa)) are catalytic. The substrate site is built by Trp-171 and Asn-285. Glu-286 serves as the catalytic Proton donor. Tyr-361 contributes to the substrate binding site. Catalysis depends on Glu-395, which acts as the Nucleophile. Trp-424 serves as a coordination point for substrate.

This sequence belongs to the glycosyl hydrolase 5 (cellulase A) family.

The protein resides in the secreted. The catalysed reaction is Random hydrolysis of (1-&gt;4)-beta-D-mannosidic linkages in mannans, galactomannans and glucomannans.. Endo-1,4-mannanase, a crucial enzyme for depolymerization of seed galactomannans and wood galactoglucomannans. The chain is Probable mannan endo-1,4-beta-mannosidase F (manF) from Aspergillus flavus (strain ATCC 200026 / FGSC A1120 / IAM 13836 / NRRL 3357 / JCM 12722 / SRRC 167).